Consider the following 291-residue polypeptide: Pituitary-specific positive transcription factor 1 (291 aa).

The 9aaTAD signature appears at 5-13 (PFTSTDTFI). The POU-specific domain maps to 124 to 198 (MDSPEIRELE…ILFKWLEEAE (75 aa)). A DNA-binding region (homeobox) is located at residues 214-273 (KRKRRTTISIAAKDALERHFGEQNKPSSQEILRMAEELNLEKEVVRVWFCNRRQREKRVK).

This sequence belongs to the POU transcription factor family. Class-1 subfamily. In terms of assembly, interacts with PITX1. Interacts with LHX3. Interacts with ELK1.

It localises to the nucleus. In terms of biological role, transcription factor involved in the specification of the lactotrope, somatotrope, and thyrotrope phenotypes in the developing anterior pituitary. Activates growth hormone and prolactin genes. Specifically binds to the consensus sequence 5'-TAAAT-3'. The sequence is that of Pituitary-specific positive transcription factor 1 (POU1F1) from Ovis aries (Sheep).